Here is a 336-residue protein sequence, read N- to C-terminus: tRNA N6-adenosine threonylcarbamoyltransferase (336 aa).

2 residues coordinate Fe cation: His-114 and His-118. Substrate-binding positions include Leu-136–Gly-140, Asp-169, Gly-182, Asp-186, and Asn-275. Asp-301 lines the Fe cation pocket.

This sequence belongs to the KAE1 / TsaD family. Requires Fe(2+) as cofactor.

It is found in the cytoplasm. It carries out the reaction L-threonylcarbamoyladenylate + adenosine(37) in tRNA = N(6)-L-threonylcarbamoyladenosine(37) in tRNA + AMP + H(+). Required for the formation of a threonylcarbamoyl group on adenosine at position 37 (t(6)A37) in tRNAs that read codons beginning with adenine. Is involved in the transfer of the threonylcarbamoyl moiety of threonylcarbamoyl-AMP (TC-AMP) to the N6 group of A37, together with TsaE and TsaB. TsaD likely plays a direct catalytic role in this reaction. This Streptococcus pneumoniae (strain Hungary19A-6) protein is tRNA N6-adenosine threonylcarbamoyltransferase.